The primary structure comprises 397 residues: Tryptophan synthase beta chain (397 aa).

Lysine 88 carries the N6-(pyridoxal phosphate)lysine modification.

Belongs to the TrpB family. In terms of assembly, tetramer of two alpha and two beta chains. Pyridoxal 5'-phosphate serves as cofactor.

It carries out the reaction (1S,2R)-1-C-(indol-3-yl)glycerol 3-phosphate + L-serine = D-glyceraldehyde 3-phosphate + L-tryptophan + H2O. The protein operates within amino-acid biosynthesis; L-tryptophan biosynthesis; L-tryptophan from chorismate: step 5/5. Its function is as follows. The beta subunit is responsible for the synthesis of L-tryptophan from indole and L-serine. This chain is Tryptophan synthase beta chain, found in Shewanella amazonensis (strain ATCC BAA-1098 / SB2B).